The sequence spans 783 residues: Probable galactinol--sucrose galactosyltransferase 5 (783 aa).

A phosphoserine mark is found at S9 and S11.

The protein belongs to the glycosyl hydrolases 36 family.

The catalysed reaction is alpha-D-galactosyl-(1-&gt;3)-1D-myo-inositol + sucrose = raffinose + myo-inositol. Transglycosidase operating by a ping-pong reaction mechanism. Involved in the synthesis of raffinose, a major soluble carbohydrate in seeds, roots and tubers. The protein is Probable galactinol--sucrose galactosyltransferase 5 (RFS5) of Arabidopsis thaliana (Mouse-ear cress).